We begin with the raw amino-acid sequence, 137 residues long: Large ribosomal subunit protein uL16 (137 aa).

This sequence belongs to the universal ribosomal protein uL16 family. As to quaternary structure, part of the 50S ribosomal subunit.

Its function is as follows. Binds 23S rRNA and is also seen to make contacts with the A and possibly P site tRNAs. In Bradyrhizobium sp. (strain ORS 278), this protein is Large ribosomal subunit protein uL16.